Consider the following 494-residue polypeptide: Probable cytosol aminopeptidase (494 aa).

Mn(2+) contacts are provided by K260 and D265. K272 is an active-site residue. Positions 283, 342, and 344 each coordinate Mn(2+). R346 is an active-site residue.

Belongs to the peptidase M17 family. Mn(2+) serves as cofactor.

Its subcellular location is the cytoplasm. The enzyme catalyses Release of an N-terminal amino acid, Xaa-|-Yaa-, in which Xaa is preferably Leu, but may be other amino acids including Pro although not Arg or Lys, and Yaa may be Pro. Amino acid amides and methyl esters are also readily hydrolyzed, but rates on arylamides are exceedingly low.. It carries out the reaction Release of an N-terminal amino acid, preferentially leucine, but not glutamic or aspartic acids.. Functionally, presumably involved in the processing and regular turnover of intracellular proteins. Catalyzes the removal of unsubstituted N-terminal amino acids from various peptides. This is Probable cytosol aminopeptidase from Bacillus thuringiensis subsp. konkukian (strain 97-27).